A 4080-amino-acid polypeptide reads, in one-letter code: Hybrid PKS-NRPS synthetase poxE (4080 aa).

The 435-residue stretch at 8 to 442 (REPIAIVGSG…GTNAHAIIEA (435 aa)) folds into the Ketosynthase family 3 (KS3) domain. Residues cysteine 181, histidine 320, and histidine 362 each act as for beta-ketoacyl synthase activity in the active site. The segment at 554-878 (VFTGQGAQWA…QRGMNDVEAM (325 aa)) is malonyl-CoA:ACP transacylase (MAT) domain. The segment at 944-1078 (HPILGTRCPD…GRLVITYGPV (135 aa)) is N-terminal hotdog fold. The 303-residue stretch at 944–1246 (HPILGTRCPD…AVPLEATNAD (303 aa)) folds into the PKS/mFAS DH domain. The interval 945–1243 (PILGTRCPDG…GIHAVPLEAT (299 aa)) is dehydratase (DH) domain. Histidine 976 functions as the Proton acceptor; for dehydratase activity in the catalytic mechanism. The tract at residues 1093-1246 (MVDVPSERFY…AVPLEATNAD (154 aa)) is C-terminal hotdog fold. The Proton donor; for dehydratase activity role is filled by aspartate 1152. Positions 1400 to 1585 (HFSDYLASVV…GVDTFTSDAD (186 aa)) are methyltransferase (MT) domain. Residues 2118–2292 (TYWLVGLTGS…AGSVMNIGAI (175 aa)) are ketoreductase (KR)domain. Residues 2399 to 2478 (TTDEIYEVIK…TIGEIIKFVL (80 aa)) are peptidyl carrier protein. Residues 2405 to 2481 (EVIKECFIVK…EIIKFVLEKL (77 aa)) form the Carrier 1 domain. An O-(pantetheine 4'-phosphoryl)serine modification is found at serine 2441. The interval 2488-2569 (SLGLSPPTGA…AASPSIHTEE (82 aa)) is disordered. Positions 2511–2525 (VVVERRNVPRLEKKI) are enriched in basic and acidic residues. The span at 2528–2545 (SAGSRTSSSVTGTSKSVS) shows a compositional bias: low complexity. Polar residues predominate over residues 2551-2565 (DTASSQTSEAASPSI). Residues 2607–3036 (KEPLSFGQSR…DSKQPGGHVS (430 aa)) are condensation. Residues 3069–3478 (DMAKQYPQKL…DGRLRIEGRI (410 aa)) are adenylation. Residues 3593–3673 (AHLNEAQAQM…KMALLIKPQE (81 aa)) enclose the Carrier 2 domain. The tract at residues 3598–3670 (AQAQMVQLWE…TLEKMALLIK (73 aa)) is thiolation. Serine 3633 is subject to O-(pantetheine 4'-phosphoryl)serine. Residues 3740–3959 (LTGATGFIGQ…DFVPVEQVVR (220 aa)) form a reductase (RED) domain region.

It in the C-terminal section; belongs to the NRP synthetase family.

Its pathway is secondary metabolite biosynthesis. Functionally, hybrid PKS-NRPS synthetase; part of the gene cluster that mediates the biosynthesis of oxaleimides, cytotoxic compounds containing an unusual disubstituted succinimide moiety. The first step of the pathway is provided by the HR-PKS poxF that serves in a new mode of collaborative biosynthesis with the PKS-NRPS poxE, by providing the olefin containing amino acid substrate via the synthesis of an ACP-bound dec-4-enoate. The cytochrome P450 monooxygenase poxM-catalyzed oxidation at the alpha-position creates the enzyme-bound 2-hydroxydec-4-enoyl-ACP thioester, which may be prone to spontaneous hydrolysis to yield 2-hydroxydec-4-enoic acid due to increased electrophilicity of the carbonyl. 2-hydroxydec-4-enoic acid can then be further oxidized by poxM to yield the alpha-ketoacid 2-oxodec-4-enoicacid, which is reductively aminated by the aminotransferase poxL to yield (S,E)-2-aminodec-4-enoic acid. The Hybrid PKS-NRPS synthetase poxE then performs condensation between the octaketide product of its PKS modules and the amino group of (S,E)-2-aminodec-4-enoic acid which is activated and incorporated by the adenylation domain. The resulting aminoacyl product can be cyclized by the Diels-Alderase PoxQ and reductively released by the reductive (R) domain of poxE to yield an aldehyde intermediate. The released aldehyde is then substrate for a Knoevenagel condensation by the hydrolyase poxO followed by an oxidation at the 5-position of the pyrrolidone ring. The presence of the olefin from the amino acid building block allows for migration of the substituted allyl group to occur. This allylic transposition reaction takes place in a conjugate addition, semipinacol-like fashion to yield a succinimide intermediate. Iterative two-electron oxidations of the C7 methyl of the succinimide intermediate to the carboxylic acid can be catalyzed by one of two remaining cytochrome P450 monooxygenasess poxC or poxD to yield oxaleimide A. Subsequent oxidation yields the maleimide scaffold oxaleimide I. Both oxaleimide A and oxaleimide I can undergo oxidative modifications in the decalin ring to yield the series of products oxaleimides B to H. This Penicillium oxalicum protein is Hybrid PKS-NRPS synthetase poxE.